The chain runs to 261 residues: 4-hydroxy-tetrahydrodipicolinate reductase (261 aa).

NAD(+)-binding positions include Gly-13–Met-18, Gly-91–Ser-93, and Ala-115–Phe-118. The active-site Proton donor/acceptor is His-149. His-150 serves as a coordination point for (S)-2,3,4,5-tetrahydrodipicolinate. Lys-153 (proton donor) is an active-site residue. (S)-2,3,4,5-tetrahydrodipicolinate is bound at residue Gly-159–Thr-160.

It belongs to the DapB family.

The protein localises to the cytoplasm. It catalyses the reaction (S)-2,3,4,5-tetrahydrodipicolinate + NAD(+) + H2O = (2S,4S)-4-hydroxy-2,3,4,5-tetrahydrodipicolinate + NADH + H(+). It carries out the reaction (S)-2,3,4,5-tetrahydrodipicolinate + NADP(+) + H2O = (2S,4S)-4-hydroxy-2,3,4,5-tetrahydrodipicolinate + NADPH + H(+). It functions in the pathway amino-acid biosynthesis; L-lysine biosynthesis via DAP pathway; (S)-tetrahydrodipicolinate from L-aspartate: step 4/4. In terms of biological role, catalyzes the conversion of 4-hydroxy-tetrahydrodipicolinate (HTPA) to tetrahydrodipicolinate. In Granulibacter bethesdensis (strain ATCC BAA-1260 / CGDNIH1), this protein is 4-hydroxy-tetrahydrodipicolinate reductase.